Reading from the N-terminus, the 81-residue chain is uncharacterized protein (81 aa).

Residues 1–22 form the signal peptide; the sequence is MNKKLSIIFLIFALIASVLCSA. The tract at residues 29–81 is disordered; the sequence is HSSSTTTTTSSSGGTSGTDSSINTGSSYSGSGSGSGSTGGSGSGSGSGTAKWK. Low complexity predominate over residues 30-58; that stretch reads SSSTTTTTSSSGGTSGTDSSINTGSSYSG. Residues 59-75 show a composition bias toward gly residues; it reads SGSGSGSTGGSGSGSGS.

It is found in the secreted. This is an uncharacterized protein from Dictyostelium discoideum (Social amoeba).